We begin with the raw amino-acid sequence, 539 residues long: Phosphoenolpyruvate carboxykinase (ATP) (539 aa).

Positions 64, 206, and 212 each coordinate substrate. ATP is bound by residues K212, H231, and 247–255; that span reads GLSGTGKTT. Mn(2+) is bound by residues K212 and H231. D268 provides a ligand contact to Mn(2+). Residues E296, R332, 448-449, and T454 contribute to the ATP site; that span reads RI. Substrate is bound at residue R332.

The protein belongs to the phosphoenolpyruvate carboxykinase (ATP) family. As to quaternary structure, monomer. The cofactor is Mn(2+).

Its subcellular location is the cytoplasm. The catalysed reaction is oxaloacetate + ATP = phosphoenolpyruvate + ADP + CO2. Its pathway is carbohydrate biosynthesis; gluconeogenesis. Its function is as follows. Involved in the gluconeogenesis. Catalyzes the conversion of oxaloacetate (OAA) to phosphoenolpyruvate (PEP) through direct phosphoryl transfer between the nucleoside triphosphate and OAA. This chain is Phosphoenolpyruvate carboxykinase (ATP), found in Pectobacterium atrosepticum (strain SCRI 1043 / ATCC BAA-672) (Erwinia carotovora subsp. atroseptica).